The following is a 582-amino-acid chain: Zinc finger protein 614 (582 aa).

Positions 8-79 (LTLEDVAVEF…VAKIQNKNCP (72 aa)) constitute a KRAB domain. The C2H2-type 1 zinc-finger motif lies at 202–224 (HACIECEQTFLRKSQLIYHENIH). The C2H2-type 2; degenerate zinc finger occupies 254–278 (KICIPNEYRKGSTVNSRLIAHQQTH). C2H2-type zinc fingers lie at residues 284–306 (YMCS…QRTH), 312–334 (YVCN…QRTH), 340–362 (YICS…QRTH), 368–390 (YICS…QRSH), 396–418 (YICS…QRTH), 424–446 (YICN…QRTH), 452–474 (YECN…ERCH), 480–502 (FVCT…QRIH), 508–530 (YECN…QRTH), and 536–558 (YGCS…KKMH).

The protein belongs to the krueppel C2H2-type zinc-finger protein family.

The protein localises to the nucleus. In terms of biological role, may be involved in transcriptional regulation. In Macaca fascicularis (Crab-eating macaque), this protein is Zinc finger protein 614 (ZNF614).